The chain runs to 159 residues: uncharacterized protein (159 aa).

Residues 7–151 (LLINYKTLEE…NPLIWEPAHI (145 aa)) enclose the N-acetyltransferase domain.

This is an uncharacterized protein from Bacillus pumilus (strain SAFR-032).